Reading from the N-terminus, the 219-residue chain is Large ribosomal subunit protein uL3 (219 aa).

A disordered region spans residues 134 to 153 (RASHGNSRSHNVPGSIGMAQ). Gln153 bears the N5-methylglutamine mark.

Belongs to the universal ribosomal protein uL3 family. In terms of assembly, part of the 50S ribosomal subunit. Forms a cluster with proteins L14 and L19. In terms of processing, methylated by PrmB.

Functionally, one of the primary rRNA binding proteins, it binds directly near the 3'-end of the 23S rRNA, where it nucleates assembly of the 50S subunit. This Paraburkholderia phytofirmans (strain DSM 17436 / LMG 22146 / PsJN) (Burkholderia phytofirmans) protein is Large ribosomal subunit protein uL3.